The sequence spans 106 residues: UPF0473 protein LCABL_08490 (106 aa).

It belongs to the UPF0473 family.

The sequence is that of UPF0473 protein LCABL_08490 from Lacticaseibacillus casei (strain BL23) (Lactobacillus casei).